We begin with the raw amino-acid sequence, 589 residues long: GTPase LSG1-2 (589 aa).

The interval 1–26 is disordered; it reads MGKSEKTSLGRSLVKHHNHMIQESKD. The CP-type G domain occupies 158 to 366; that stretch reads WRQLWRVLER…LCDCPGLVFP (209 aa). Positions 176-180 match the DARXP motif motif; it reads DARDP. A G4 region spans residues 206 to 209; it reads NKAD. A GTP-binding site is contributed by 206–209; it reads NKAD. A G5 region spans residues 237–239; sequence AAT. The tract at residues 315-322 is G1; it reads GYPNVGKS. 318 to 323 is a binding site for GTP; it reads NVGKSS. The interval 341-345 is G2; that stretch reads GKTKH. The tract at residues 359-362 is G3; it reads DCPG. A GTP-binding site is contributed by glycine 362. Residues 495-509 are compositionally biased toward acidic residues; sequence GSESDDSAVGDETEN. Disordered stretches follow at residues 495 to 515 and 534 to 589; these read GSESDDSAVGDETENEQVPGI and SKKV…LTMR. The short motif at 534–541 is the Nuclear localization signal element; it reads SKKVTAKK. A compositionally biased stretch (basic residues) spans 534–558; sequence SKKVTAKKQTASHKQHKKPQRKKDR. Over residues 580–589 the composition is skewed to polar residues; sequence PANTGPLTMR.

It belongs to the TRAFAC class YlqF/YawG GTPase family. Ubiquitous, with the highest expression in reproductive and strongly dividing tissues.

Its subcellular location is the cytoplasm. It localises to the nucleus. In terms of biological role, GTPase involved in ribosome biogenesis. Binds to 23S rRNA and associates with 60S pre-ribosomes. Involved in early cotyledon and leaf development. In Arabidopsis thaliana (Mouse-ear cress), this protein is GTPase LSG1-2.